The sequence spans 338 residues: Ketol-acid reductoisomerase (NADP(+)) (338 aa).

The region spanning 1–181 (MNVFYDKDAD…GGGRAGIIET (181 aa)) is the KARI N-terminal Rossmann domain. NADP(+) contacts are provided by residues 24 to 27 (YGSQ), R47, and S52. The active site involves H107. G133 contributes to the NADP(+) binding site. The 146-residue stretch at 182–327 (NFREETETDL…AKLRAMMPWI (146 aa)) folds into the KARI C-terminal knotted domain. 4 residues coordinate Mg(2+): D190, E194, E226, and E230. S251 lines the substrate pocket.

This sequence belongs to the ketol-acid reductoisomerase family. The cofactor is Mg(2+).

It carries out the reaction (2R)-2,3-dihydroxy-3-methylbutanoate + NADP(+) = (2S)-2-acetolactate + NADPH + H(+). The enzyme catalyses (2R,3R)-2,3-dihydroxy-3-methylpentanoate + NADP(+) = (S)-2-ethyl-2-hydroxy-3-oxobutanoate + NADPH + H(+). The protein operates within amino-acid biosynthesis; L-isoleucine biosynthesis; L-isoleucine from 2-oxobutanoate: step 2/4. It participates in amino-acid biosynthesis; L-valine biosynthesis; L-valine from pyruvate: step 2/4. Involved in the biosynthesis of branched-chain amino acids (BCAA). Catalyzes an alkyl-migration followed by a ketol-acid reduction of (S)-2-acetolactate (S2AL) to yield (R)-2,3-dihydroxy-isovalerate. In the isomerase reaction, S2AL is rearranged via a Mg-dependent methyl migration to produce 3-hydroxy-3-methyl-2-ketobutyrate (HMKB). In the reductase reaction, this 2-ketoacid undergoes a metal-dependent reduction by NADPH to yield (R)-2,3-dihydroxy-isovalerate. This is Ketol-acid reductoisomerase (NADP(+)) from Burkholderia cenocepacia (strain HI2424).